A 473-amino-acid chain; its full sequence is Bifunctional protein HldE (473 aa).

Residues 1–318 are ribokinase; that stretch reads MKLSMPRFDQ…RAIQREEGSE (318 aa). 194 to 197 lines the ATP pocket; the sequence is NLSE. Asp263 is an active-site residue. Residues 343-473 form a cytidylyltransferase region; the sequence is FTNGCFDILH…TAIVEKIRKN (131 aa).

The protein in the N-terminal section; belongs to the carbohydrate kinase PfkB family. It in the C-terminal section; belongs to the cytidylyltransferase family. Homodimer.

It catalyses the reaction D-glycero-beta-D-manno-heptose 7-phosphate + ATP = D-glycero-beta-D-manno-heptose 1,7-bisphosphate + ADP + H(+). The enzyme catalyses D-glycero-beta-D-manno-heptose 1-phosphate + ATP + H(+) = ADP-D-glycero-beta-D-manno-heptose + diphosphate. It functions in the pathway nucleotide-sugar biosynthesis; ADP-L-glycero-beta-D-manno-heptose biosynthesis; ADP-L-glycero-beta-D-manno-heptose from D-glycero-beta-D-manno-heptose 7-phosphate: step 1/4. The protein operates within nucleotide-sugar biosynthesis; ADP-L-glycero-beta-D-manno-heptose biosynthesis; ADP-L-glycero-beta-D-manno-heptose from D-glycero-beta-D-manno-heptose 7-phosphate: step 3/4. Catalyzes the phosphorylation of D-glycero-D-manno-heptose 7-phosphate at the C-1 position to selectively form D-glycero-beta-D-manno-heptose-1,7-bisphosphate. In terms of biological role, catalyzes the ADP transfer from ATP to D-glycero-beta-D-manno-heptose 1-phosphate, yielding ADP-D-glycero-beta-D-manno-heptose. The polypeptide is Bifunctional protein HldE (Pseudomonas putida (strain GB-1)).